The following is a 32-amino-acid chain: Fibrinolytic enzyme 2 (32 aa).

The 32-residue stretch at Ile-1–Arg-32 folds into the Peptidase S8 domain. The Charge relay system role is filled by Ser-5.

It belongs to the peptidase S8 family.

Its activity is regulated as follows. Inhibited by PMSF. Not inhibited by benzamidine, aprotinin, SBTI, EDTA, EGTA, 2-mercaptoethanol, iodoacetic acid or pepstatin A. Functionally, serine protease. Has fibrinolytic and fibrinogenolytic but no plasminogenolytic activity. Cleaves after Arg and Lys residues. Cleaves fibrinogen alpha chain, beta chain and gamma chain in that order. This Hediste japonica (Polychaete worm) protein is Fibrinolytic enzyme 2.